The following is a 132-amino-acid chain: Protein C10 (132 aa).

Alanine 2 is subject to N-acetylalanine.

The protein belongs to the UPF0456 family.

The protein localises to the cytoplasm. Functionally, in brain, may be required for corpus callosum development. The chain is Protein C10 from Bos taurus (Bovine).